We begin with the raw amino-acid sequence, 200 residues long: Large ribosomal subunit protein bL25 (200 aa).

It belongs to the bacterial ribosomal protein bL25 family. CTC subfamily. In terms of assembly, part of the 50S ribosomal subunit; part of the 5S rRNA/L5/L18/L25 subcomplex. Contacts the 5S rRNA. Binds to the 5S rRNA independently of L5 and L18.

Its function is as follows. This is one of the proteins that binds to the 5S RNA in the ribosome where it forms part of the central protuberance. The sequence is that of Large ribosomal subunit protein bL25 from Leifsonia xyli subsp. xyli (strain CTCB07).